The sequence spans 148 residues: Wheatwin-2 (148 aa).

Residues 1–23 form the signal peptide; that stretch reads MTMAARLMLVAALLCAAAAAATA. A Pyrrolidone carboxylic acid modification is found at Gln-24. Residues 24 to 148 enclose the Barwin domain; sequence QQATNVRATY…VNYQFVDCRD (125 aa). Intrachain disulfides connect Cys-54/Cys-86, Cys-75/Cys-109, and Cys-89/Cys-146.

As to quaternary structure, monomer.

In terms of biological role, shows antifungal activity towards B.cinerea and towards the wheat-specific pathogenic fungi F.culmorum and F.graminearum (groups 1 and 2). The sequence is that of Wheatwin-2 (PR4B) from Triticum aestivum (Wheat).